The chain runs to 82 residues: Small ribosomal subunit protein bS18 (82 aa).

A disordered region spans residues 1–20 (MAEVSSSTVRRPFHRRRKTC).

It belongs to the bacterial ribosomal protein bS18 family. In terms of assembly, part of the 30S ribosomal subunit. Forms a tight heterodimer with protein bS6.

Functionally, binds as a heterodimer with protein bS6 to the central domain of the 16S rRNA, where it helps stabilize the platform of the 30S subunit. This Allorhizobium ampelinum (strain ATCC BAA-846 / DSM 112012 / S4) (Agrobacterium vitis (strain S4)) protein is Small ribosomal subunit protein bS18.